We begin with the raw amino-acid sequence, 410 residues long: MNPQLNNLTLPIYMDYQATTPIDPRVMEAMLPYFTTKFGNPHSRSHSFGWEAENAVEEARSMVAKLIGADTKEIIFTSGATESNNLAIKGIAKFYSNKKNHIITVVSEHKCVLDACRHLEQEGIKITYLPIKPNGIIDLETLKNAITDQTMLVSVMVVNNEIGVVQPLKEIGKICREKGVFFHSDIAQGFGKIPIDVNAFNIDLASISGHKIYGPKGIGALYVRKKPRVRVTPLINGGGQERGMRSGTLPTPLIVGLGMAAEIAYSEMEKDTKHVNYLFDRFLNNIHKRISEVYLNGDKNQRYKGNLNLSFAGVEGESMILAIKDLAVSSGSACTSASLEPSYVLRSMGIGEELAHTAIRFGIGRFTTEQEVDYAVNLICSKIDKLRALSPLWEMMQEGIDLKKIKWAVH.

Pyridoxal 5'-phosphate contacts are provided by residues 80 to 81 (AT), asparagine 160, glutamine 188, and 208 to 210 (SGH). Lysine 211 bears the N6-(pyridoxal phosphate)lysine mark. Pyridoxal 5'-phosphate is bound at residue threonine 248. The Cysteine persulfide intermediate role is filled by cysteine 334. Cysteine 334 lines the [2Fe-2S] cluster pocket.

This sequence belongs to the class-V pyridoxal-phosphate-dependent aminotransferase family. NifS/IscS subfamily. In terms of assembly, homodimer. Forms a heterotetramer with IscU, interacts with other sulfur acceptors. Requires pyridoxal 5'-phosphate as cofactor.

The protein resides in the cytoplasm. It carries out the reaction (sulfur carrier)-H + L-cysteine = (sulfur carrier)-SH + L-alanine. Its pathway is cofactor biosynthesis; iron-sulfur cluster biosynthesis. Its function is as follows. Master enzyme that delivers sulfur to a number of partners involved in Fe-S cluster assembly, tRNA modification or cofactor biosynthesis. Catalyzes the removal of elemental sulfur atoms from cysteine to produce alanine. Functions as a sulfur delivery protein for Fe-S cluster synthesis onto IscU, an Fe-S scaffold assembly protein, as well as other S acceptor proteins. The polypeptide is Cysteine desulfurase IscS (Rickettsia peacockii (strain Rustic)).